The chain runs to 485 residues: MLDLNLDVDSTESTQNERDSITVKGVSLNQMDESVTSNSSVVNAEASSCIDGEDELCSTRTVKFQFEILKGGGEEEEEDDDERSAVMMTKEFFPVAKGMNFMDSSAQSSRSTVDISFQRGKQGGDFIGSGSGGGDASRVMQPPSQPVKKSRRGPRSKSSQYRGVTFYRRTGRWESHIWDCGKQVYLGGFDTAHAAARAYDRAAVKFRGLEADINFVIGDYEEDLKQMANLSKEEVVQVLRRQSSGFSRNNSRYQGVALQKIGGWGAQMEQLHGNMGCDKAAVQWKGREAASLIEPHASRMIPEAANVKLDLNLGISLSLGDGPKQKDRALRLHHVPNNSVCGRNTMMENHMAAAACDTPFNFLKRGSDHLNNRHALPSAFFSPMERTPEKGLMLRSHQSFPARTWQGHDQSSGGTAVAATAPPLFSNAASSGFSLSATRPPSSTAIHHPSQPFVNLNQPGLYVIHPSDYISQHQHNLMNRPQPPP.

Over residues Gly124–Asp135 the composition is skewed to gly residues. The segment at Gly124–Tyr161 is disordered. A DNA-binding region (AP2/ERF) is located at residues Gln160 to Val216.

Belongs to the AP2/ERF transcription factor family. AP2 subfamily.

The protein resides in the nucleus. In terms of biological role, probably acts as a transcriptional activator. Binds to the GCC-box pathogenesis-related promoter element. May be involved in the regulation of gene expression by stress factors and by components of stress signal transduction pathways. Regulates negatively the transition to flowering time and confers flowering time delay. This Arabidopsis thaliana (Mouse-ear cress) protein is AP2-like ethylene-responsive transcription factor TOE2 (TOE2).